A 116-amino-acid chain; its full sequence is Beta-2-microglobulin (116 aa).

The signal sequence occupies residues 1–19 (MKFLLSFVVLAVFSASAFA). Residues 24-111 (PKIQVYSRNP…RHLKETKNIS (88 aa)) form the Ig-like C1-type domain. An intrachain disulfide couples Cys44 to Cys99.

This sequence belongs to the beta-2-microglobulin family. As to quaternary structure, heterodimer of an alpha chain and a beta chain. Beta-2-microglobulin is the beta-chain of major histocompatibility complex class I molecules.

The protein resides in the secreted. Its function is as follows. Component of the class I major histocompatibility complex (MHC). Involved in the presentation of peptide antigens to the immune system. In Ictalurus punctatus (Channel catfish), this protein is Beta-2-microglobulin (b2m).